Here is a 528-residue protein sequence, read N- to C-terminus: GMP synthase [glutamine-hydrolyzing] (528 aa).

Residues 13 to 204 enclose the Glutamine amidotransferase type-1 domain; sequence SILILDFGSQ…VYSIAKCKAD (192 aa). The active-site Nucleophile is the Cys-90. Catalysis depends on residues His-178 and Glu-180. One can recognise a GMPS ATP-PPase domain in the interval 205 to 403; that stretch reads WTTETFLEET…LGLPDEIIKR (199 aa). 232–238 lines the ATP pocket; the sequence is SGGVDSS.

As to quaternary structure, homodimer.

The enzyme catalyses XMP + L-glutamine + ATP + H2O = GMP + L-glutamate + AMP + diphosphate + 2 H(+). The protein operates within purine metabolism; GMP biosynthesis; GMP from XMP (L-Gln route): step 1/1. In terms of biological role, catalyzes the synthesis of GMP from XMP. This is GMP synthase [glutamine-hydrolyzing] from Prochlorococcus marinus subsp. pastoris (strain CCMP1986 / NIES-2087 / MED4).